We begin with the raw amino-acid sequence, 500 residues long: NAD(P)H-quinone oxidoreductase chain 4, chloroplastic (500 aa).

A run of 14 helical transmembrane segments spans residues 4-24 (FPWLTLIVVLPISAGSLIFFL), 37-57 (IFICMLELLLTTYVFCYHFQL), 87-107 (IGPILLTGFITTLATLAAWPV), 113-130 (LFHFLMLAMYSGQIGSFS), 134-154 (LLLFFIMWELELIPVYLLLSM), 167-187 (FILYTAGGSIFLLLGVLGIGL), 208-228 (ALEIIFYIGFFIAFAVKSPII), 242-262 (HYSTCMLLAGILLKMGAYGLV), 272-292 (AHSIFSPWLVVVGTMQIIYAA), 305-325 (IAYSSVSHMGFIIIGIGSITD), 330-350 (GAILQIISHGFLGAALFFLAG), 386-406 (LALPGMSGFVAELIVFFGIIT), 416-436 (ILITFVMAIGMILTPIYSLSM), and 462-482 (LFVLISIFLPVIGIGIYPDFV).

The protein belongs to the complex I subunit 4 family.

It localises to the plastid. The protein localises to the chloroplast thylakoid membrane. The catalysed reaction is a plastoquinone + NADH + (n+1) H(+)(in) = a plastoquinol + NAD(+) + n H(+)(out). It carries out the reaction a plastoquinone + NADPH + (n+1) H(+)(in) = a plastoquinol + NADP(+) + n H(+)(out). This chain is NAD(P)H-quinone oxidoreductase chain 4, chloroplastic, found in Vitis vinifera (Grape).